A 429-amino-acid chain; its full sequence is Ribosomal RNA small subunit methyltransferase B (429 aa).

S-adenosyl-L-methionine is bound by residues 254 to 260 (CAAPGGK), Asp277, Asp303, and Asp322. Cys375 functions as the Nucleophile in the catalytic mechanism.

The protein belongs to the class I-like SAM-binding methyltransferase superfamily. RsmB/NOP family.

It is found in the cytoplasm. It carries out the reaction cytidine(967) in 16S rRNA + S-adenosyl-L-methionine = 5-methylcytidine(967) in 16S rRNA + S-adenosyl-L-homocysteine + H(+). In terms of biological role, specifically methylates the cytosine at position 967 (m5C967) of 16S rRNA. This is Ribosomal RNA small subunit methyltransferase B from Shigella sonnei (strain Ss046).